We begin with the raw amino-acid sequence, 225 residues long: Probable septum site-determining protein MinC (225 aa).

This sequence belongs to the MinC family. As to quaternary structure, interacts with MinD and FtsZ.

In terms of biological role, cell division inhibitor that blocks the formation of polar Z ring septums. Rapidly oscillates between the poles of the cell to destabilize FtsZ filaments that have formed before they mature into polar Z rings. Prevents FtsZ polymerization. The protein is Probable septum site-determining protein MinC of Listeria monocytogenes serotype 4b (strain CLIP80459).